Reading from the N-terminus, the 1183-residue chain is MAGQVVQYGRHRKRRNYARISEVLELPNLIEIQTKSYEWFLREGLIEMFRDISPIEDFTGNLSLEFVDYRLGEPKYDLEESKNRDATYAAPLRVKVRLIIKETGEVKEQEVFMGDFPLMTDTGTFVINGAERVIVSQLVRSPSVYFNEKIDKNGRENYDATIIPNRGAWLEYETDAKDVVYVRIDRTRKLPLTVLLRALGFSSDQEIVDLLGDNEYLRNTLEKDGTENTEQALLEIYERLRPGEPPTVENAKSLLYSRFFDPKRYDLASVGRYKTNKKLHLKHRLFNQKLAEPIVNTETGEIVVEEGTVLDRRKIDEIMDVLESNANSEVFELHGSVIDEPVEIQSIKVYVPNDDEGRTTTVIGNAFPDSEVKCITPADIIASMSYFFNLLSGIGYTDDIDHLGNRRLRSVGELLQNQFRIGLSRMERVVRERMSIQDTESITPQQLINIRPVIASIKEFFGSSQLSQFMYQSNPLSDLTHKRRLSALGPGGLTRERAQMEVRDVHYSHYGRMCPIETPEGPNIGLINSLSSYARVNEFGFIETPYRKVDLDTHAITDQIDYLTADEEDSYVVAQANSKLDENGRFMDDEVVCRFRGNNTVMAKEKMDYMDVSPKQVVSAATACIPFLENDDSNRALMGANMQRQAVPLMNPEAPFVGTGMEHVAARDSGAAITAKHRGRVEHVESNEILVRRLVEENGVEHEGELDRYPLAKFKRSNSGTCYNQRPIVAVGDVVEYNEILADGPSMELGEMALGRNVVVGFMTWDGYNYEDAVIMSERLVKDDVYTSIHIEEYESEARDTKLGPEEITRDIPNVSESALKNLDDRGIVYIGAEVKDGDILVGKVTPKGVTELTAEERLLHAIFGEKAREVRDTSLRVPHGAGGIVLDVKVFNREEGDDTLSPGVNQLVRVYIVQKRKIHVGDKMCGRHGNKGVISKIVPEEDMPYLPDGRPIDIMLNPLGVPSRMNIGQVLELHLGMAAKNLGIHVASPVFDGANDDDVWSTIEEAGMARDGKTVLYDGRTGEPFDNRISVGVMYMLKLAHMVDDKLHARSTGPYSLVTQQPLGGKAQFGGQRFGEMEVWALEAYGAAYTLQEILTYKSDDTVGRVKTYEAIVKGENISRPSVPESFRVLMKELQSLGLDVKVMDEQDNEIEMTDVDDDDVVERKVDLQQNDAPETQKEVTD.

The protein belongs to the RNA polymerase beta chain family. In terms of assembly, the RNAP catalytic core consists of 2 alpha, 1 beta, 1 beta' and 1 omega subunit. When a sigma factor is associated with the core the holoenzyme is formed, which can initiate transcription.

The enzyme catalyses RNA(n) + a ribonucleoside 5'-triphosphate = RNA(n+1) + diphosphate. Its function is as follows. DNA-dependent RNA polymerase catalyzes the transcription of DNA into RNA using the four ribonucleoside triphosphates as substrates. The chain is DNA-directed RNA polymerase subunit beta from Staphylococcus aureus (strain JH9).